Consider the following 145-residue polypeptide: MQEVTIYSDGACKGNPGPGGWGAVLVAGGHEKELFGGESPTTNNRMELMAVIEALRALKRPCIVNIYTDSQYVQKGISEWIHGWKARGWKTADKKPVKNADLWQALDEAQKPHQITWHWVRGHNGHPGNERADALANRGVASINT.

One can recognise an RNase H type-1 domain in the interval 1-141; the sequence is MQEVTIYSDG…ADALANRGVA (141 aa). Residues D9, E47, D69, and D133 each contribute to the Mg(2+) site.

This sequence belongs to the RNase H family. In terms of assembly, monomer. The cofactor is Mg(2+).

It is found in the cytoplasm. It catalyses the reaction Endonucleolytic cleavage to 5'-phosphomonoester.. Its function is as follows. Endonuclease that specifically degrades the RNA of RNA-DNA hybrids. This chain is Ribonuclease H, found in Cupriavidus metallidurans (strain ATCC 43123 / DSM 2839 / NBRC 102507 / CH34) (Ralstonia metallidurans).